The primary structure comprises 71 residues: Small ribosomal subunit protein bS21B (71 aa).

The protein belongs to the bacterial ribosomal protein bS21 family.

The polypeptide is Small ribosomal subunit protein bS21B (Rhizobium johnstonii (strain DSM 114642 / LMG 32736 / 3841) (Rhizobium leguminosarum bv. viciae)).